Consider the following 213-residue polypeptide: Probable aspartate aminotransferase (213 aa).

G47, W133, and N183 together coordinate L-aspartate.

This sequence belongs to the class-I pyridoxal-phosphate-dependent aminotransferase family. Homodimer. Pyridoxal 5'-phosphate serves as cofactor.

The protein resides in the cytoplasm. The catalysed reaction is L-aspartate + 2-oxoglutarate = oxaloacetate + L-glutamate. The polypeptide is Probable aspartate aminotransferase (aspC) (Streptomyces griseus).